The chain runs to 278 residues: HTH-type transcriptional activator RhaS (278 aa).

The HTH araC/xylS-type domain maps to 174–272 (NQLMAWLEDH…NWSPRDIRQG (99 aa)). 2 DNA-binding regions (H-T-H motif) span residues 191–212 (EAVA…KQHT) and 239–262 (VTEI…RREF).

Binds DNA as a dimer.

It localises to the cytoplasm. Activates expression of the rhaBAD and rhaT operons. This chain is HTH-type transcriptional activator RhaS, found in Salmonella agona (strain SL483).